The chain runs to 269 residues: Formamidopyrimidine-DNA glycosylase (269 aa).

Pro-2 serves as the catalytic Schiff-base intermediate with DNA. Residue Glu-3 is the Proton donor of the active site. Lys-57 serves as the catalytic Proton donor; for beta-elimination activity. The DNA site is built by His-90, Arg-109, and Lys-150. The FPG-type zinc-finger motif lies at 235–269 (QVYGKAGEPCPECGEAIQEQKIGQRNTFYCSYCQC). Arg-259 serves as the catalytic Proton donor; for delta-elimination activity.

Belongs to the FPG family. In terms of assembly, monomer. Zn(2+) is required as a cofactor.

The catalysed reaction is Hydrolysis of DNA containing ring-opened 7-methylguanine residues, releasing 2,6-diamino-4-hydroxy-5-(N-methyl)formamidopyrimidine.. The enzyme catalyses 2'-deoxyribonucleotide-(2'-deoxyribose 5'-phosphate)-2'-deoxyribonucleotide-DNA = a 3'-end 2'-deoxyribonucleotide-(2,3-dehydro-2,3-deoxyribose 5'-phosphate)-DNA + a 5'-end 5'-phospho-2'-deoxyribonucleoside-DNA + H(+). Involved in base excision repair of DNA damaged by oxidation or by mutagenic agents. Acts as a DNA glycosylase that recognizes and removes damaged bases. Has a preference for oxidized purines, such as 7,8-dihydro-8-oxoguanine (8-oxoG). Has AP (apurinic/apyrimidinic) lyase activity and introduces nicks in the DNA strand. Cleaves the DNA backbone by beta-delta elimination to generate a single-strand break at the site of the removed base with both 3'- and 5'-phosphates. The sequence is that of Formamidopyrimidine-DNA glycosylase from Vibrio vulnificus (strain CMCP6).